The primary structure comprises 157 residues: Large ribosomal subunit protein eL24 (157 aa).

Residues Arg-94–Arg-157 are disordered. The span at Gln-96 to Lys-117 shows a compositional bias: basic and acidic residues. A compositionally biased stretch (low complexity) spans Lys-123–Pro-140.

This sequence belongs to the eukaryotic ribosomal protein eL24 family. As to quaternary structure, component of the large ribosomal subunit.

It is found in the cytoplasm. Component of the large ribosomal subunit. The ribosome is a large ribonucleoprotein complex responsible for the synthesis of proteins in the cell. The polypeptide is Large ribosomal subunit protein eL24 (rpl24) (Gillichthys mirabilis (Long-jawed mudsucker)).